Reading from the N-terminus, the 343-residue chain is tRNA N6-adenosine threonylcarbamoyltransferase (343 aa).

The Fe cation site is built by His115 and His119. Residues 137 to 141, Asp170, Gly183, Asp187, and Asn276 each bind substrate; that span reads LVSGG. Asp306 contacts Fe cation.

The protein belongs to the KAE1 / TsaD family. Fe(2+) serves as cofactor.

Its subcellular location is the cytoplasm. It catalyses the reaction L-threonylcarbamoyladenylate + adenosine(37) in tRNA = N(6)-L-threonylcarbamoyladenosine(37) in tRNA + AMP + H(+). Its function is as follows. Required for the formation of a threonylcarbamoyl group on adenosine at position 37 (t(6)A37) in tRNAs that read codons beginning with adenine. Is involved in the transfer of the threonylcarbamoyl moiety of threonylcarbamoyl-AMP (TC-AMP) to the N6 group of A37, together with TsaE and TsaB. TsaD likely plays a direct catalytic role in this reaction. The polypeptide is tRNA N6-adenosine threonylcarbamoyltransferase (Limosilactobacillus reuteri (strain DSM 20016) (Lactobacillus reuteri)).